Consider the following 236-residue polypeptide: MTSRLFALIPCAGTGSRSGAPMPKQYRTVAGRDMLHYSLAAFDACSEFAQTLVVIAPDDQHFDARRFGGLRFAVQRCGGASRQASVLNGLHALAGFGAHDDDWVLVHDAARPGITPALIRALVGALKDDAVGGIMALPVADTLKRVAPGTDNRIDHTEPRDGLWQAQTPQMFRIGMLRDAILRAQSDGHDLTDEASAIEWSGHAPRLVQGSLRNFKVTYPEDFDLAEAILGRGAAG.

The protein belongs to the IspD/TarI cytidylyltransferase family. IspD subfamily.

It carries out the reaction 2-C-methyl-D-erythritol 4-phosphate + CTP + H(+) = 4-CDP-2-C-methyl-D-erythritol + diphosphate. Its pathway is isoprenoid biosynthesis; isopentenyl diphosphate biosynthesis via DXP pathway; isopentenyl diphosphate from 1-deoxy-D-xylulose 5-phosphate: step 2/6. Catalyzes the formation of 4-diphosphocytidyl-2-C-methyl-D-erythritol from CTP and 2-C-methyl-D-erythritol 4-phosphate (MEP). In Paraburkholderia phymatum (strain DSM 17167 / CIP 108236 / LMG 21445 / STM815) (Burkholderia phymatum), this protein is 2-C-methyl-D-erythritol 4-phosphate cytidylyltransferase.